We begin with the raw amino-acid sequence, 164 residues long: Cyclic pyranopterin monophosphate synthase (164 aa).

Residues 77–79 and 115–116 each bind substrate; these read LCH and ME. D130 is an active-site residue.

The protein belongs to the MoaC family. As to quaternary structure, homohexamer; trimer of dimers.

It catalyses the reaction (8S)-3',8-cyclo-7,8-dihydroguanosine 5'-triphosphate = cyclic pyranopterin phosphate + diphosphate. It functions in the pathway cofactor biosynthesis; molybdopterin biosynthesis. Its function is as follows. Catalyzes the conversion of (8S)-3',8-cyclo-7,8-dihydroguanosine 5'-triphosphate to cyclic pyranopterin monophosphate (cPMP). This chain is Cyclic pyranopterin monophosphate synthase, found in Sinorhizobium medicae (strain WSM419) (Ensifer medicae).